The primary structure comprises 385 residues: 28S rRNA (uridine-N(3))-methyltransferase (385 aa).

2 disordered regions span residues 1-35 (MAER…KKKW) and 47-72 (QRAQ…NQGR). Basic and acidic residues-rich tracts occupy residues 15–35 (HGQR…KKKW) and 47–58 (QRAQEEEAKRQE). 4 residues coordinate S-adenosyl-L-methionine: Arg-293, Gly-313, Asn-342, and Thr-343.

This sequence belongs to the class IV-like SAM-binding methyltransferase superfamily. In terms of assembly, interacts with INCA1.

The protein localises to the cytoplasm. It localises to the cytoskeleton. It is found in the spindle. Its subcellular location is the chromosome. The protein resides in the centromere. The protein localises to the kinetochore. It localises to the microtubule organizing center. It is found in the centrosome. It carries out the reaction uridine in 28S rRNA + S-adenosyl-L-methionine = N(3)-methyluridine in 28S rRNA + S-adenosyl-L-homocysteine + H(+). Its function is as follows. S-adenosyl-L-methionine-dependent methyltransferase that specifically methylates the N3 position of a uridine in 28S rRNA. Required for association of the centrosomes with the poles of the bipolar mitotic spindle during metaphase. Also involved in chromosome alignment. May promote centrosome maturation probably by recruiting A-kinase anchor protein AKAP9 to centrosomes in early mitosis. Binds specifically to miRNA MIR145 hairpin, regulates MIR145 expression at a postranscriptional level. The sequence is that of 28S rRNA (uridine-N(3))-methyltransferase from Mus musculus (Mouse).